The primary structure comprises 259 residues: Glutamate racemase (259 aa).

Substrate-binding positions include 7-8 (DS) and 39-40 (YG). Residue C70 is the Proton donor/acceptor of the active site. A substrate-binding site is contributed by 71-72 (NS). Residue C180 is the Proton donor/acceptor of the active site. 181-182 (TH) is a binding site for substrate.

The protein belongs to the aspartate/glutamate racemases family.

It carries out the reaction L-glutamate = D-glutamate. It participates in cell wall biogenesis; peptidoglycan biosynthesis. In terms of biological role, provides the (R)-glutamate required for cell wall biosynthesis. The chain is Glutamate racemase from Hydrogenobaculum sp. (strain Y04AAS1).